Consider the following 489-residue polypeptide: Anthranilate synthase component 1 1 (489 aa).

262–264 is a binding site for L-tryptophan; sequence PYS. The tract at residues 288-309 is disordered; the sequence is DRIETEPIAGTRPRGETPDADD. 297 to 298 contacts chorismate; that stretch reads GT. Basic and acidic residues predominate over residues 300-309; sequence PRGETPDADD. Glutamate 324 contributes to the Mg(2+) binding site. Chorismate-binding positions include tyrosine 412, arginine 432, 446–448, and glycine 448; that span reads GAG. Glutamate 461 serves as a coordination point for Mg(2+).

Belongs to the anthranilate synthase component I family. In terms of assembly, tetramer of two components I and two components II. The cofactor is Mg(2+).

It catalyses the reaction chorismate + L-glutamine = anthranilate + pyruvate + L-glutamate + H(+). It functions in the pathway amino-acid biosynthesis; L-tryptophan biosynthesis; L-tryptophan from chorismate: step 1/5. This Haloarcula marismortui (strain ATCC 43049 / DSM 3752 / JCM 8966 / VKM B-1809) (Halobacterium marismortui) protein is Anthranilate synthase component 1 1 (trpE1).